Reading from the N-terminus, the 221-residue chain is Thyrotroph embryonic factor (221 aa).

The interval 72-116 (ESASSSTASPPSSSTAVFQPSETVSSTESSLEKERETPSPIDPNC) is disordered. Residues 73–100 (SASSSTASPPSSSTAVFQPSETVSSTES) show a composition bias toward low complexity. The bZIP domain occupies 173–221 (DEKYWTRRKKNNVAAKRSRDARRLKENQITIRAAFLEKENTALRTEVAD). The basic motif stretch occupies residues 175-195 (KYWTRRKKNNVAAKRSRDARR). The tract at residues 196-203 (LKENQITI) is leucine-zipper.

The protein belongs to the bZIP family. PAR subfamily. As to quaternary structure, binds DNA as a homodimer or a heterodimer. Can form a heterodimer with DBP.

It is found in the nucleus. Functionally, transcription factor that binds to and transactivates the TSHB promoter. Binds to a minimal DNA-binding sequence 5'-[TC][AG][AG]TTA[TC][AG]-3'. The chain is Thyrotroph embryonic factor (TEF) from Phodopus sungorus (Striped hairy-footed hamster).